Here is a 906-residue protein sequence, read N- to C-terminus: Formin-like protein 18 (906 aa).

A signal peptide spans Met1 to Gly25. The chain crosses the membrane as a helical span at residues Met120–Phe140. Disordered regions lie at residues Ala267–Pro416 and Asn854–Asp906. Over residues Ala274–Pro292 the composition is skewed to pro residues. Positions Ser293–Pro303 are enriched in basic residues. 3 stretches are compositionally biased toward pro residues: residues Ala320–Ser339, Gly348–Gly375, and Gly383–Lys402. Composition is skewed to low complexity over residues Lys403–Pro416 and Asn854–Phe877. Residues Ala411 to Ala866 enclose the FH2 domain. A compositionally biased stretch (basic and acidic residues) spans Arg878–Ala889. Positions Ser897–Asp906 are enriched in low complexity.

The protein belongs to the formin-like family. Class-I subfamily.

The protein resides in the membrane. This Oryza sativa subsp. japonica (Rice) protein is Formin-like protein 18 (FH18).